The following is a 365-amino-acid chain: Peptide chain release factor 2 (365 aa).

Gln-251 bears the N5-methylglutamine mark.

This sequence belongs to the prokaryotic/mitochondrial release factor family. Post-translationally, methylated by PrmC. Methylation increases the termination efficiency of RF2.

Its subcellular location is the cytoplasm. Peptide chain release factor 2 directs the termination of translation in response to the peptide chain termination codons UGA and UAA. In Campylobacter jejuni subsp. jejuni serotype O:2 (strain ATCC 700819 / NCTC 11168), this protein is Peptide chain release factor 2.